A 114-amino-acid chain; its full sequence is Progonadoliberin-2 (114 aa).

The first 25 residues, 1–25 (MASSMLGFLLLLLLLMAAHPGPSEA), serve as a signal peptide directing secretion. Positions 22–80 (PSEAQHWSHGWYPGGKRASNSPQDPQSALRPPAPSAAQTAHSFRSAALASPEDSVPWEG) are disordered. G35 bears the Glycine amide mark.

This sequence belongs to the GnRH family. Midbrain.

The protein resides in the secreted. Its function is as follows. Stimulates the secretion of gonadotropins; it stimulates the secretion of both luteinizing and follicle-stimulating hormones. This is Progonadoliberin-2 (GNRH2) from Tupaia belangeri (Common tree shrew).